A 108-amino-acid chain; its full sequence is Thiosulfate sulfurtransferase GlpE (108 aa).

In terms of domain architecture, Rhodanese spans 17 to 105 (QEKEAVLVDI…WQRQFPAEVA (89 aa)). Cysteine 65 functions as the Cysteine persulfide intermediate in the catalytic mechanism.

It belongs to the GlpE family.

Its subcellular location is the cytoplasm. It catalyses the reaction thiosulfate + hydrogen cyanide = thiocyanate + sulfite + 2 H(+). It carries out the reaction thiosulfate + [thioredoxin]-dithiol = [thioredoxin]-disulfide + hydrogen sulfide + sulfite + 2 H(+). Transferase that catalyzes the transfer of sulfur from thiosulfate to thiophilic acceptors such as cyanide or dithiols. May function in a CysM-independent thiosulfate assimilation pathway by catalyzing the conversion of thiosulfate to sulfite, which can then be used for L-cysteine biosynthesis. The chain is Thiosulfate sulfurtransferase GlpE from Escherichia coli O45:K1 (strain S88 / ExPEC).